Consider the following 107-residue polypeptide: UPF0060 membrane protein A1S_1909 (107 aa).

4 helical membrane passes run 2 to 22, 28 to 48, 56 to 76, and 85 to 105; these read FGLFIITAIAEILGCYFPYLI, SAWLWLPTALSLAVFVWLLTL, IYAAYGGIYIFTALMWLRFVD, and ILGGVIVLCGAGLIILQPQGL.

It belongs to the UPF0060 family.

It is found in the cell inner membrane. This is UPF0060 membrane protein A1S_1909 from Acinetobacter baumannii (strain ATCC 17978 / DSM 105126 / CIP 53.77 / LMG 1025 / NCDC KC755 / 5377).